We begin with the raw amino-acid sequence, 404 residues long: Probable tRNA sulfurtransferase (404 aa).

The 106-residue stretch at 60–165 folds into the THUMP domain; it reads TAVAESLKQV…EEAAYLSYET (106 aa). Residues 183–184, 208–209, arginine 265, glycine 287, and glutamine 296 each bind ATP; these read ML and HF.

Belongs to the ThiI family.

The protein localises to the cytoplasm. It carries out the reaction [ThiI sulfur-carrier protein]-S-sulfanyl-L-cysteine + a uridine in tRNA + 2 reduced [2Fe-2S]-[ferredoxin] + ATP + H(+) = [ThiI sulfur-carrier protein]-L-cysteine + a 4-thiouridine in tRNA + 2 oxidized [2Fe-2S]-[ferredoxin] + AMP + diphosphate. It catalyses the reaction [ThiS sulfur-carrier protein]-C-terminal Gly-Gly-AMP + S-sulfanyl-L-cysteinyl-[cysteine desulfurase] + AH2 = [ThiS sulfur-carrier protein]-C-terminal-Gly-aminoethanethioate + L-cysteinyl-[cysteine desulfurase] + A + AMP + 2 H(+). It participates in cofactor biosynthesis; thiamine diphosphate biosynthesis. Its function is as follows. Catalyzes the ATP-dependent transfer of a sulfur to tRNA to produce 4-thiouridine in position 8 of tRNAs, which functions as a near-UV photosensor. Also catalyzes the transfer of sulfur to the sulfur carrier protein ThiS, forming ThiS-thiocarboxylate. This is a step in the synthesis of thiazole, in the thiamine biosynthesis pathway. The sulfur is donated as persulfide by IscS. The chain is Probable tRNA sulfurtransferase from Streptococcus pneumoniae (strain ATCC 700669 / Spain 23F-1).